A 248-amino-acid polypeptide reads, in one-letter code: Ubiquinone biosynthesis O-methyltransferase (248 aa).

Positions 40, 71, 92, and 135 each coordinate S-adenosyl-L-methionine.

This sequence belongs to the methyltransferase superfamily. UbiG/COQ3 family.

It carries out the reaction a 3-demethylubiquinol + S-adenosyl-L-methionine = a ubiquinol + S-adenosyl-L-homocysteine + H(+). The enzyme catalyses a 3-(all-trans-polyprenyl)benzene-1,2-diol + S-adenosyl-L-methionine = a 2-methoxy-6-(all-trans-polyprenyl)phenol + S-adenosyl-L-homocysteine + H(+). Its pathway is cofactor biosynthesis; ubiquinone biosynthesis. O-methyltransferase that catalyzes the 2 O-methylation steps in the ubiquinone biosynthetic pathway. The polypeptide is Ubiquinone biosynthesis O-methyltransferase (Roseobacter denitrificans (strain ATCC 33942 / OCh 114) (Erythrobacter sp. (strain OCh 114))).